A 1132-amino-acid chain; its full sequence is Cytospin-A (1132 aa).

Residues methionine 1–lysine 166 are disordered. Composition is skewed to low complexity over residues serine 73–serine 109 and serine 119–serine 129. The segment covering serine 150–serine 159 has biased composition (basic and acidic residues). Residues aspartate 226 to glutamine 268 adopt a coiled-coil conformation. Positions alanine 301 to glutamate 381 are disordered. Over residues serine 333–aspartate 343 the composition is skewed to polar residues. Low complexity predominate over residues alanine 348–glycine 377. 2 coiled-coil regions span residues alanine 385–leucine 440 and arginine 478–valine 798. Disordered regions lie at residues threonine 869–valine 895 and serine 939–proline 1016. The segment covering alanine 875 to threonine 889 has biased composition (pro residues). Positions glutamine 946–arginine 961 are enriched in polar residues. Basic and acidic residues predominate over residues arginine 962–serine 972. Positions alanine 979–serine 1000 are enriched in low complexity. The 106-residue stretch at glycine 1026 to glutamate 1131 folds into the Calponin-homology (CH) domain.

The protein belongs to the cytospin-A family. In terms of assembly, may interact with both microtubules and actin cytoskeleton.

It is found in the cytoplasm. The protein resides in the cytoskeleton. The protein localises to the spindle. It localises to the cell junction. Its subcellular location is the gap junction. Involved in cytokinesis and spindle organization. May play a role in actin cytoskeleton organization and microtubule stabilization and hence required for proper cell adhesion and migration. The polypeptide is Cytospin-A (specc1la) (Danio rerio (Zebrafish)).